We begin with the raw amino-acid sequence, 418 residues long: Glycine betaine transport ATP-binding protein OpuAA (418 aa).

Positions 34–270 (KTKKEILKAT…PSNEYVEKFV (237 aa)) constitute an ABC transporter domain. Residue 66–73 (GLSGSGKS) participates in ATP binding. 2 consecutive CBS domains span residues 284–340 (IMKR…DLSL) and 344–403 (LNTE…INAE).

Belongs to the ABC transporter superfamily. In terms of assembly, the complex is composed of two ATP-binding proteins (OpuAA), two transmembrane proteins (OpuAB) and a solute-binding protein (OpuAC).

The catalysed reaction is a quaternary ammonium(out) + ATP + H2O = a quaternary ammonium(in) + ADP + phosphate + H(+). Its function is as follows. Involved in a multicomponent binding-protein-dependent transport system for glycine betaine. Probably responsible for energy coupling to the transport system. This chain is Glycine betaine transport ATP-binding protein OpuAA (opuAA), found in Bacillus subtilis (strain 168).